The sequence spans 678 residues: Endopolyphosphatase (678 aa).

At 1 to 2 (MR) the chain is on the cytoplasmic side. Residues 3 to 23 (SPLLASLFALALSIASSEAAI) form a helical; Signal-anchor for type II membrane protein membrane-spanning segment. The Vacuolar portion of the chain corresponds to 24–678 (SSTEQVPLSG…ELMLVSTETD (655 aa)). Residues 70 to 109 (YKTGSTFDSGCHRKPKKDGKSEGKKATENERGNEDLDDKE) are disordered. A compositionally biased stretch (basic and acidic residues) spans 87–103 (DGKSEGKKATENERGNE). N-linked (GlcNAc...) asparagine glycosylation is found at Asn138, Asn369, and Asn447. The disordered stretch occupies residues 504 to 547 (KGSGGHRHDVPKGDCSLPSNEDKPHCTFKRKPRHYSKRSPSRTN). Basic residues predominate over residues 529 to 543 (CTFKRKPRHYSKRSP). N-linked (GlcNAc...) asparagine glycosylation is found at Asn591 and Asn616.

It belongs to the endopolyphosphatase PPN1 family. A divalent metal cation serves as cofactor. Processing by proteases in the vacuole may be required for activation.

Its subcellular location is the vacuole membrane. The enzyme catalyses [phosphate](n+1) + n H2O = (n+1) phosphate + n H(+). In terms of biological role, catalyzes the hydrolysis of inorganic polyphosphate (polyP) chains of many hundreds of phosphate residues into shorter lengths. The protein is Endopolyphosphatase (PPN1) of Cryptococcus neoformans var. neoformans serotype D (strain JEC21 / ATCC MYA-565) (Filobasidiella neoformans).